A 144-amino-acid chain; its full sequence is Large ribosomal subunit protein uL16 (144 aa).

Basic residues predominate over residues 1–16 (MLIPKRVKYRKQHRPR). Residues 1–25 (MLIPKRVKYRKQHRPRGNGGVSKGG) form a disordered region.

Belongs to the universal ribosomal protein uL16 family. In terms of assembly, part of the 50S ribosomal subunit.

Its function is as follows. Binds 23S rRNA and is also seen to make contacts with the A and possibly P site tRNAs. This Desulforamulus reducens (strain ATCC BAA-1160 / DSM 100696 / MI-1) (Desulfotomaculum reducens) protein is Large ribosomal subunit protein uL16.